The primary structure comprises 147 residues: uncharacterized protein (147 aa).

This is an uncharacterized protein from Mycobacterium tuberculosis (strain CDC 1551 / Oshkosh).